The primary structure comprises 950 residues: General transcription factor II-I repeat domain-containing protein 2 (950 aa).

GTF2I-like repeat units follow at residues 100–194 (QVDS…QPGG) and 324–418 (LSSL…SNVG).

Belongs to the TFII-I family.

The protein resides in the nucleus. The polypeptide is General transcription factor II-I repeat domain-containing protein 2 (GTF2IRD2) (Bos taurus (Bovine)).